The sequence spans 233 residues: Glycerol-3-phosphate acyltransferase (233 aa).

5 helical membrane-spanning segments follow: residues 7–27, 94–114, 127–147, 153–173, and 185–205; these read WIIIAIICSYLIGAIPFGYII, ISIVFGAAAAIGHIKSIYIGF, VIAINPIIGLSGIGLFFIVAF, SIGSVVASFSVAVMMWIGVLI, and ISYESQIINLVAISLIVLLII.

This sequence belongs to the PlsY family. As to quaternary structure, probably interacts with PlsX.

The protein localises to the cell membrane. The enzyme catalyses an acyl phosphate + sn-glycerol 3-phosphate = a 1-acyl-sn-glycero-3-phosphate + phosphate. Its pathway is lipid metabolism; phospholipid metabolism. Its function is as follows. Catalyzes the transfer of an acyl group from acyl-phosphate (acyl-PO(4)) to glycerol-3-phosphate (G3P) to form lysophosphatidic acid (LPA). This enzyme utilizes acyl-phosphate as fatty acyl donor, but not acyl-CoA or acyl-ACP. The polypeptide is Glycerol-3-phosphate acyltransferase (Acholeplasma laidlawii).